A 209-amino-acid polypeptide reads, in one-letter code: Pyridoxine/pyridoxamine 5'-phosphate oxidase (209 aa).

Substrate contacts are provided by residues arginine 2 to tyrosine 5 and lysine 66. FMN is bound by residues arginine 61–lysine 66, phenylalanine 76–threonine 77, lysine 83, and glutamine 105. Tyrosine 123, arginine 127, and serine 131 together coordinate substrate. Residues glutamine 140 to serine 141 and tryptophan 186 contribute to the FMN site. Arginine 192 to histidine 194 contacts substrate. An FMN-binding site is contributed by arginine 196.

Belongs to the pyridoxamine 5'-phosphate oxidase family. In terms of assembly, homodimer. FMN serves as cofactor.

The catalysed reaction is pyridoxamine 5'-phosphate + O2 + H2O = pyridoxal 5'-phosphate + H2O2 + NH4(+). It catalyses the reaction pyridoxine 5'-phosphate + O2 = pyridoxal 5'-phosphate + H2O2. It participates in cofactor metabolism; pyridoxal 5'-phosphate salvage; pyridoxal 5'-phosphate from pyridoxamine 5'-phosphate: step 1/1. Its pathway is cofactor metabolism; pyridoxal 5'-phosphate salvage; pyridoxal 5'-phosphate from pyridoxine 5'-phosphate: step 1/1. Functionally, catalyzes the oxidation of either pyridoxine 5'-phosphate (PNP) or pyridoxamine 5'-phosphate (PMP) into pyridoxal 5'-phosphate (PLP). The sequence is that of Pyridoxine/pyridoxamine 5'-phosphate oxidase from Mycobacterium sp. (strain JLS).